The primary structure comprises 300 residues: HTH-type transcriptional regulator ArgP (300 aa).

The HTH lysR-type domain occupies 4–60 (FDYKLLAALAAVVEQGGFERAAQALGLSQSAVSQRIKLLEARVGQPVLVRETPPHPT). Positions 21–40 (FERAAQALGLSQSAVSQRIK) form a DNA-binding region, H-T-H motif.

This sequence belongs to the LysR transcriptional regulatory family. In terms of assembly, homodimer.

Its function is as follows. Controls the transcription of genes involved in arginine and lysine metabolism. The chain is HTH-type transcriptional regulator ArgP from Pseudomonas aeruginosa (strain UCBPP-PA14).